The following is a 213-amino-acid chain: Holliday junction resolvase RecU (213 aa).

Residues threonine 99, aspartate 101, glutamate 114, and glutamine 133 each contribute to the Mg(2+) site.

Belongs to the RecU family. Requires Mg(2+) as cofactor.

It localises to the cytoplasm. It catalyses the reaction Endonucleolytic cleavage at a junction such as a reciprocal single-stranded crossover between two homologous DNA duplexes (Holliday junction).. Endonuclease that resolves Holliday junction intermediates in genetic recombination. Cleaves mobile four-strand junctions by introducing symmetrical nicks in paired strands. Promotes annealing of linear ssDNA with homologous dsDNA. Required for DNA repair, homologous recombination and chromosome segregation. The sequence is that of Holliday junction resolvase RecU from Lactococcus lactis subsp. cremoris (strain MG1363).